An 855-amino-acid polypeptide reads, in one-letter code: Zinc finger protein 814 (855 aa).

One can recognise a KRAB domain in the interval 15–91; the sequence is VTFEDVAVNF…PMAGVSPKKA (77 aa). Residues 120–142 form a C2H2-type 1; degenerate zinc finger; it reads HRCEAWGNKLYDSGNFHQHQNEH. 22 C2H2-type zinc fingers span residues 242 to 264, 269 to 291, 296 to 318, 324 to 346, 352 to 374, 380 to 402, 408 to 430, 436 to 458, 464 to 486, 492 to 514, 520 to 542, 548 to 570, 576 to 598, 604 to 626, 632 to 654, 660 to 682, 688 to 710, 716 to 738, 744 to 766, 772 to 794, 800 to 822, and 828 to 850; these read YVCC…QRVH, HECG…QRVH, YECG…QRVH, YECG…QRFH, YGCE…QRVH, FKCG…QRVH, YQCG…QRVH, YECG…QQIH, YGCG…QRVH, YECG…QRMH, YKCG…QRVH, FKCG…QHGH, YVCR…QRIH, YACE…QRVH, YECN…KRIH, YECS…KRVH, and YKCE…QSSH. A Glycyl lysine isopeptide (Lys-Gly) (interchain with G-Cter in SUMO2) cross-link involves residue lysine 335. Lysine 391 is covalently cross-linked (Glycyl lysine isopeptide (Lys-Gly) (interchain with G-Cter in SUMO2)).

This is Zinc finger protein 814 (ZNF814) from Homo sapiens (Human).